The chain runs to 668 residues: Ubiquitin ligase complex F-box protein UFO1 (668 aa).

Residues 5 to 51 (GLVLQDLPPEILINIFSHLDEKDLFTLQELSTHFRNLIHDEELWKNL) form the F-box domain. Phosphoserine is present on S511. The residue at position 514 (T514) is a Phosphothreonine. 3 consecutive UIM domains span residues 547 to 566 (DEDEQLRRALEESQLIYETQ), 583 to 602 (EDDEEFLRAIRQSRVEDERR), and 651 to 668 (NVDEDLQLAIALSLSEIN). Residues 564–578 (ETQTNSSANHGNNTN) show a composition bias toward polar residues. Disordered regions lie at residues 564-585 (ETQTNSSANHGNNTNDEIDEDD) and 599-639 (DERR…TENT).

Interacts with SKP1. Component of the probable SCF(UFO1) complex containing CDC53, SKP1, RBX1 and UFO1.

It participates in protein modification; protein ubiquitination. Its function is as follows. Substrate recognition component of a SCF (SKP1-CUL1-F-box protein) E3 ubiquitin-protein ligase complex which mediates the ubiquitination and subsequent proteasomal degradation of target proteins. Probably recognizes and binds to phosphorylated target proteins. The chain is Ubiquitin ligase complex F-box protein UFO1 (UFO1) from Saccharomyces cerevisiae (strain ATCC 204508 / S288c) (Baker's yeast).